We begin with the raw amino-acid sequence, 301 residues long: NADH-cytochrome b5 reductase 3 (301 aa).

A lipid anchor (N-myristoyl glycine) is attached at Gly-2. The region spanning Asp-40 to Gln-152 is the FAD-binding FR-type domain. Position 42 is an N6-acetyllysine (Lys-42). Tyr-43 bears the Phosphotyrosine mark. Lys-50 carries the N6-acetyllysine modification. Residues Arg-92, Pro-93, Tyr-94, Val-109, Lys-111, and Phe-114 each coordinate FAD. The residue at position 120 (Lys-120) is an N6-acetyllysine. Lys-126, Met-127, Ser-128, and Thr-185 together coordinate FAD.

Belongs to the flavoprotein pyridine nucleotide cytochrome reductase family. As to quaternary structure, component of a complex composed of cytochrome b5, NADH-cytochrome b5 reductase (CYB5R3) and MTARC2. Interacts with MTLN; the interaction is required to maintain cellular lipid composition and leads to stimulation of mitochondrial respiratory complex I activity. The cofactor is FAD. Myristoylated. Ubiquitously expressed. In terms of tissue distribution, expressed only in erythroid tissues, reticulocytes and liver.

It is found in the endoplasmic reticulum membrane. Its subcellular location is the mitochondrion outer membrane. The protein localises to the cytoplasm. The catalysed reaction is 2 Fe(III)-[cytochrome b5] + NADH = 2 Fe(II)-[cytochrome b5] + NAD(+) + H(+). In terms of biological role, catalyzes the reduction of two molecules of cytochrome b5 using NADH as the electron donor. This Rattus norvegicus (Rat) protein is NADH-cytochrome b5 reductase 3.